The primary structure comprises 351 residues: Foldase protein PrsA 1 (351 aa).

A signal peptide spans 1–22 (MKNSNKLIASVVTLASVMALAA). C23 is lipidated: N-palmitoyl cysteine. C23 carries S-diacylglycerol cysteine lipidation. The PpiC domain occupies 145–240 (TPTMAVEMIT…KKFYIVKVTK (96 aa)). Composition is skewed to low complexity over residues 303–317 (KTKA…SESS) and 326–351 (ESEQ…PAAQ). Positions 303-351 (KTKAASESSTTSESSKAAEENPSESEQTQTSSAEEPTETEAQTQEPAAQ) are disordered.

The protein belongs to the PrsA family.

The protein resides in the cell membrane. It carries out the reaction [protein]-peptidylproline (omega=180) = [protein]-peptidylproline (omega=0). Plays a major role in protein secretion by helping the post-translocational extracellular folding of several secreted proteins. The protein is Foldase protein PrsA 1 (prsA1) of Streptococcus pyogenes serotype M18 (strain MGAS8232).